The sequence spans 105 residues: Large ribosomal subunit protein uL24 (105 aa).

Belongs to the universal ribosomal protein uL24 family. In terms of assembly, part of the 50S ribosomal subunit.

Functionally, one of two assembly initiator proteins, it binds directly to the 5'-end of the 23S rRNA, where it nucleates assembly of the 50S subunit. One of the proteins that surrounds the polypeptide exit tunnel on the outside of the subunit. The polypeptide is Large ribosomal subunit protein uL24 (Francisella tularensis subsp. tularensis (strain FSC 198)).